Here is a 467-residue protein sequence, read N- to C-terminus: Asparagine--tRNA ligase (467 aa).

It belongs to the class-II aminoacyl-tRNA synthetase family. Homodimer.

It is found in the cytoplasm. It carries out the reaction tRNA(Asn) + L-asparagine + ATP = L-asparaginyl-tRNA(Asn) + AMP + diphosphate + H(+). The polypeptide is Asparagine--tRNA ligase (Mannheimia succiniciproducens (strain KCTC 0769BP / MBEL55E)).